A 436-amino-acid polypeptide reads, in one-letter code: 23S rRNA (uracil(1939)-C(5))-methyltransferase RlmD (436 aa).

The TRAM domain occupies 10-68 (KQKTTQKIVAEIQDLDYQGLGVAKIQGKTWFIENALPTEKVEAVVTDEKRQYGLATAQK). Cys81, Cys87, Cys90, and Cys168 together coordinate [4Fe-4S] cluster. S-adenosyl-L-methionine contacts are provided by Gln270, Phe299, Asn304, Glu320, Asp347, and Asp368. The Nucleophile role is filled by Cys394.

The protein belongs to the class I-like SAM-binding methyltransferase superfamily. RNA M5U methyltransferase family. RlmD subfamily.

It catalyses the reaction uridine(1939) in 23S rRNA + S-adenosyl-L-methionine = 5-methyluridine(1939) in 23S rRNA + S-adenosyl-L-homocysteine + H(+). In terms of biological role, catalyzes the formation of 5-methyl-uridine at position 1939 (m5U1939) in 23S rRNA. The polypeptide is 23S rRNA (uracil(1939)-C(5))-methyltransferase RlmD (Haemophilus parainfluenzae (strain T3T1)).